Consider the following 338-residue polypeptide: NADPH dehydrogenase (338 aa).

FMN is bound at residue 22–25; that stretch reads SPMC. Residue tyrosine 27 participates in substrate binding. FMN is bound by residues alanine 59 and glutamine 101. Position 163–166 (163–166) interacts with substrate; the sequence is HAAH. Residues arginine 214 and 306–307 each bind FMN; that span reads GR.

This sequence belongs to the NADH:flavin oxidoreductase/NADH oxidase family. NamA subfamily. As to quaternary structure, homotetramer. It depends on FMN as a cofactor.

The enzyme catalyses A + NADPH + H(+) = AH2 + NADP(+). Its function is as follows. Catalyzes the reduction of the double bond of an array of alpha,beta-unsaturated aldehydes and ketones. It also reduces the nitro group of nitroester and nitroaromatic compounds. It could have a role in detoxification processes. This Listeria monocytogenes serovar 1/2a (strain ATCC BAA-679 / EGD-e) protein is NADPH dehydrogenase.